The following is a 318-amino-acid chain: Small ribosomal subunit protein mS26 (318 aa).

The segment at 295-318 (IDSKLNPTSNGAGNNGNNNNTTNL) is disordered. A compositionally biased stretch (low complexity) spans 300–318 (NPTSNGAGNNGNNNNTTNL).

The protein belongs to the mitochondrion-specific ribosomal protein mS26 family. As to quaternary structure, component of the mitochondrial small ribosomal subunit (mt-SSU). Mature yeast 74S mitochondrial ribosomes consist of a small (37S) and a large (54S) subunit. The 37S small subunit contains a 15S ribosomal RNA (15S mt-rRNA) and 34 different proteins. The 54S large subunit contains a 21S rRNA (21S mt-rRNA) and 46 different proteins.

Its subcellular location is the mitochondrion. Its function is as follows. Component of the mitochondrial ribosome (mitoribosome), a dedicated translation machinery responsible for the synthesis of mitochondrial genome-encoded proteins, including at least some of the essential transmembrane subunits of the mitochondrial respiratory chain. The mitoribosomes are attached to the mitochondrial inner membrane and translation products are cotranslationally integrated into the membrane. The sequence is that of Small ribosomal subunit protein mS26 (PET123) from Saccharomyces cerevisiae (strain ATCC 204508 / S288c) (Baker's yeast).